Here is a 673-residue protein sequence, read N- to C-terminus: UvrABC system protein B (673 aa).

The Helicase ATP-binding domain occupies 26 to 183; sequence EGLEDGLAHQ…RRLAELQYTR (158 aa). 39–46 contributes to the ATP binding site; it reads GVTGSGKT. The Beta-hairpin motif lies at 92 to 115; that stretch reads YYDYYQPEAYVPSSDTFIEKDASV. The Helicase C-terminal domain maps to 431 to 597; the sequence is QVDDLLSEIR…GLNKKVVDIL (167 aa). One can recognise a UVR domain in the interval 633 to 668; it reads QQKIHELEGQMMQHAQNLEFEEAAQIRDQLHQLREL.

This sequence belongs to the UvrB family. In terms of assembly, forms a heterotetramer with UvrA during the search for lesions. Interacts with UvrC in an incision complex.

The protein resides in the cytoplasm. In terms of biological role, the UvrABC repair system catalyzes the recognition and processing of DNA lesions. A damage recognition complex composed of 2 UvrA and 2 UvrB subunits scans DNA for abnormalities. Upon binding of the UvrA(2)B(2) complex to a putative damaged site, the DNA wraps around one UvrB monomer. DNA wrap is dependent on ATP binding by UvrB and probably causes local melting of the DNA helix, facilitating insertion of UvrB beta-hairpin between the DNA strands. Then UvrB probes one DNA strand for the presence of a lesion. If a lesion is found the UvrA subunits dissociate and the UvrB-DNA preincision complex is formed. This complex is subsequently bound by UvrC and the second UvrB is released. If no lesion is found, the DNA wraps around the other UvrB subunit that will check the other stand for damage. The sequence is that of UvrABC system protein B from Klebsiella pneumoniae subsp. pneumoniae (strain ATCC 700721 / MGH 78578).